A 155-amino-acid polypeptide reads, in one-letter code: Cell division protein SepF (155 aa).

The span at 22 to 46 (RYVEEPEQRDERPALEKGRAPKEKQ) shows a compositional bias: basic and acidic residues. Residues 22-54 (RYVEEPEQRDERPALEKGRAPKEKQTAGMEQNQ) are disordered.

This sequence belongs to the SepF family. In terms of assembly, homodimer. Interacts with FtsZ.

It localises to the cytoplasm. Cell division protein that is part of the divisome complex and is recruited early to the Z-ring. Probably stimulates Z-ring formation, perhaps through the cross-linking of FtsZ protofilaments. Its function overlaps with FtsA. The chain is Cell division protein SepF from Shouchella clausii (strain KSM-K16) (Alkalihalobacillus clausii).